The primary structure comprises 347 residues: Outer membrane protein A (347 aa).

An N-terminal signal peptide occupies residues 1 to 21; the sequence is MKKQALTIIFLLVSLVTGIQA. 8 beta stranded membrane-spanning segments follow: residues 26–36, 63–74, 78–86, 105–116, 121–129, 154–163, 168–175, and 194–202; these read HWYLGTKMGWS, APVFGLFLGYEF, FSFEIENDT, NSLQLATKLSYP, FHIYTQLGG, PNVSLGAEYI, FITRLDYT, and DVALSFGWK. Residues 207 to 218 form a hinge-like region; the sequence is NINEIFSSYIPQ. Residues 220–347 form the OmpA-like domain; sequence SDKQYVALNE…RRVEIEVLSD (128 aa). Residues C321 and C333 are joined by a disulfide bond.

This sequence belongs to the outer membrane OOP (TC 1.B.6) superfamily. OmpA family. In terms of assembly, monomer and homodimer.

The protein resides in the cell outer membrane. Its function is as follows. With TolR probably plays a role in maintaining the position of the peptidoglycan cell wall in the periplasm. Acts as a porin with low permeability that allows slow penetration of small solutes; an internal gate slows down solute passage. The protein is Outer membrane protein A of Buchnera aphidicola subsp. Schizaphis graminum (strain Sg).